We begin with the raw amino-acid sequence, 382 residues long: METHIKTVEFERPDMLSEAQSGASCVAHAWAKVPPVLSREERDELKARIKRLLKEREAVLVAHYYVDADLQDLAEETGGCVSDSLEMARFGRDHSAKTLIVAGVRFMGETAKILSPEKTVLMPDLDATCSLDLGCPPDEFAAFCDAHPDRTVVVYANTSAAVKARADWMVTSSIGLKIVQHLHAQGKKILWAPDRHLGSYIQKQTGADMLMWQGSCLVHDEFKGVELDLLRAEHPNAKILVHPESPESVVAQADVVGSTSQLIAAAQSLSAQEFIVATDNGILHKMRMAAPGKRFIEAPTAGNAATCKSCAHCPWMAMNALTNLAEVLETGRNEIHVDPAIGRQAVVCIDRMLDFAAREKATVRPQGDLAANAQLFQGIGPA.

Iminosuccinate-binding residues include H63 and S84. C129 contributes to the [4Fe-4S] cluster binding site. Iminosuccinate is bound by residues 155-157 (YAN) and S172. C216 is a [4Fe-4S] cluster binding site. Residues 242–244 (HPE) and T259 contribute to the iminosuccinate site. C313 is a binding site for [4Fe-4S] cluster.

This sequence belongs to the quinolinate synthase family. Type 1 subfamily. Requires [4Fe-4S] cluster as cofactor.

Its subcellular location is the cytoplasm. The enzyme catalyses iminosuccinate + dihydroxyacetone phosphate = quinolinate + phosphate + 2 H2O + H(+). It participates in cofactor biosynthesis; NAD(+) biosynthesis; quinolinate from iminoaspartate: step 1/1. Its function is as follows. Catalyzes the condensation of iminoaspartate with dihydroxyacetone phosphate to form quinolinate. The chain is Quinolinate synthase from Ralstonia pickettii (strain 12J).